A 1068-amino-acid polypeptide reads, in one-letter code: Carbamoyl phosphate synthase large chain (1068 aa).

Positions 1–401 are carboxyphosphate synthetic domain; the sequence is MPRRTDLHRI…SLLKAVRSLE (401 aa). 12 residues coordinate ATP: Arg129, Arg169, Gly175, Gly176, Gln208, Ile210, Glu215, Gly241, Val242, His243, Gln284, and Glu298. The region spanning 133–327 is the ATP-grasp 1 domain; sequence KQLMDELGQP…IAKIAAKIAV (195 aa). Residues Gln284, Glu298, and Asn300 each coordinate Mg(2+). Mn(2+) is bound by residues Gln284, Glu298, and Asn300. The segment at 402–546 is oligomerization domain; it reads IGVDHLALRE…YSTYEMENES (145 aa). A carbamoyl phosphate synthetic domain region spans residues 547–935; sequence KKSQRPSVLV…ALYKVFEAAN (389 aa). An ATP-grasp 2 domain is found at 671 to 867; it reads ESLLAELGIP…MAEVATRIIL (197 aa). ATP is bound by residues Arg707, Arg746, Leu748, Glu752, Gly777, Val778, His779, Ser780, Gln820, and Glu838. Residues Gln820, Glu838, and Asn840 each contribute to the Mg(2+) site. 3 residues coordinate Mn(2+): Gln820, Glu838, and Asn840. The region spanning 936–1068 is the MGS-like domain; that stretch reads LHVPEYGKIL…ESRVFSTESI (133 aa). An allosteric domain region spans residues 936–1068; the sequence is LHVPEYGKIL…ESRVFSTESI (133 aa).

It belongs to the CarB family. In terms of assembly, composed of two chains; the small (or glutamine) chain promotes the hydrolysis of glutamine to ammonia, which is used by the large (or ammonia) chain to synthesize carbamoyl phosphate. Tetramer of heterodimers (alpha,beta)4. Mg(2+) is required as a cofactor. The cofactor is Mn(2+).

The enzyme catalyses hydrogencarbonate + L-glutamine + 2 ATP + H2O = carbamoyl phosphate + L-glutamate + 2 ADP + phosphate + 2 H(+). It carries out the reaction hydrogencarbonate + NH4(+) + 2 ATP = carbamoyl phosphate + 2 ADP + phosphate + 2 H(+). It participates in amino-acid biosynthesis; L-arginine biosynthesis; carbamoyl phosphate from bicarbonate: step 1/1. Its pathway is pyrimidine metabolism; UMP biosynthesis via de novo pathway; (S)-dihydroorotate from bicarbonate: step 1/3. In terms of biological role, large subunit of the glutamine-dependent carbamoyl phosphate synthetase (CPSase). CPSase catalyzes the formation of carbamoyl phosphate from the ammonia moiety of glutamine, carbonate, and phosphate donated by ATP, constituting the first step of 2 biosynthetic pathways, one leading to arginine and/or urea and the other to pyrimidine nucleotides. The large subunit (synthetase) binds the substrates ammonia (free or transferred from glutamine from the small subunit), hydrogencarbonate and ATP and carries out an ATP-coupled ligase reaction, activating hydrogencarbonate by forming carboxy phosphate which reacts with ammonia to form carbamoyl phosphate. This Cutibacterium acnes (strain DSM 16379 / KPA171202) (Propionibacterium acnes) protein is Carbamoyl phosphate synthase large chain.